Consider the following 120-residue polypeptide: Small ribosomal subunit protein uS10 (120 aa).

Phosphoserine is present on residues Ser-16 and Ser-18.

Belongs to the universal ribosomal protein uS10 family. In terms of tissue distribution, expressed ubiquitously in embryos, highest expression is in the midgut.

The protein is Small ribosomal subunit protein uS10 (RpS20) of Drosophila melanogaster (Fruit fly).